The following is a 492-amino-acid chain: Coagulation factor X (492 aa).

Positions 1–23 are cleaved as a signal peptide; the sequence is MAGLLHLVLLSTALGGLLRPAGS. A propeptide spanning residues 24–40 is cleaved from the precursor; the sequence is VFLPRDQAHRVLQRARR. The Gla domain occupies 41–85; the sequence is ANSFLEEVKQGNLERECLEEACSLEEAREVFEDAEQTDEFWSKYK. Residues Glu46, Glu47, Glu54, Glu56, Glu59, Glu60, Glu65, Glu66, Glu69, Glu72, Glu75, and Glu79 each carry the 4-carboxyglutamate modification. An intrachain disulfide couples Cys57 to Cys62. The EGF-like 1; calcium-binding domain maps to 86–122; sequence DGDQCEGHPCLNQGHCKDGIGDYTCTCAEGFEGKNCE. 11 disulfide bridges follow: Cys90–Cys101, Cys95–Cys110, Cys112–Cys121, Cys129–Cys140, Cys136–Cys149, Cys151–Cys164, Cys172–Cys341, Cys240–Cys245, Cys260–Cys276, Cys389–Cys403, and Cys414–Cys442. At Asp103 the chain carries (3R)-3-hydroxyaspartate. The EGF-like 2 domain occupies 125–165; it reads TREICSLDNGGCDQFCREERSEVRCSCAHGYVLGDDSKSCV. A propeptide spans 183-233 (activation peptide); it reads WAIHTSEDALDASELEHYDPADLSPTESSLDLLGLNRTEPSAGEDGSQVVR. Tyr200 carries the post-translational modification Sulfotyrosine. O-linked (GalNAc...) threonine glycosylation is present at Thr208. Residue Asn218 is glycosylated (N-linked (GlcNAc...) asparagine). Positions 234 to 466 constitute a Peptidase S1 domain; that stretch reads IVGGRDCAEG…FLKWIDKIMK (233 aa). Active-site charge relay system residues include His275 and Asp321. Ser418 (charge relay system) is an active-site residue. The segment at 472-492 is disordered; that stretch reads AGSRGHSEAPATWTVPPPLPL. Residues 476 to 492 constitute a propeptide, may be removed but is not necessary for activation; it reads GHSEAPATWTVPPPLPL. An O-linked (GalNAc...) threonine glycan is attached at Thr485.

Belongs to the peptidase S1 family. As to quaternary structure, the two chains are formed from a single-chain precursor by the excision of two Arg residues and are held together by 1 or more disulfide bonds. Forms a heterodimer with SERPINA5. Interacts (activated) with guianensin, an anticoagulant protein from Simulium guianense saliva. Interacts (activated) with simukunin, an anticoagulant protein from Simulium vittatum saliva. In terms of processing, the vitamin K-dependent, enzymatic carboxylation of some glutamate residues allows the modified protein to bind calcium. Post-translationally, N- and O-glycosylated. Proteolytically cleaved and activated by cathepsin CTSG. The activation peptide is cleaved by factor IXa (in the intrinsic pathway), or by factor VIIa (in the extrinsic pathway). In terms of processing, the iron and 2-oxoglutarate dependent 3-hydroxylation of aspartate and asparagine is (R) stereospecific within EGF domains.

The protein localises to the secreted. The catalysed reaction is Selective cleavage of Arg-|-Thr and then Arg-|-Ile bonds in prothrombin to form thrombin.. Inhibited by SERPINA5. In terms of biological role, factor Xa is a vitamin K-dependent glycoprotein that converts prothrombin to thrombin in the presence of factor Va, calcium and phospholipid during blood clotting. Factor Xa activates pro-inflammatory and pro-fibrotic signaling pathways in a protease-activated receptor (PAR)-dependent manner. In Bos taurus (Bovine), this protein is Coagulation factor X (F10).